The primary structure comprises 147 residues: Ras-related protein RabK2 (147 aa).

Residues 11 to 15 and 63 to 66 each bind GTP; these read NTHGS and TKSD. C145 carries S-geranylgeranyl cysteine lipidation.

This sequence belongs to the small GTPase superfamily. Rab family.

The protein localises to the cell membrane. The chain is Ras-related protein RabK2 (rabK2) from Dictyostelium discoideum (Social amoeba).